The primary structure comprises 347 residues: Photosystem II protein D1 (347 aa).

A run of 3 helical transmembrane segments spans residues 32–49 (YIGW…LATV), 121–136 (HFIL…EWEF), and 145–159 (WIFV…AASA). Chlorophyll a is bound at residue histidine 121. Tyrosine 129 contributes to the pheophytin a binding site. [CaMn4O5] cluster-binding residues include aspartate 173 and glutamate 192. Residues 200 to 221 (FHILGVAAVFGGSLFSAMHGSL) form a helical membrane-spanning segment. Histidine 201 provides a ligand contact to chlorophyll a. A quinone is bound by residues histidine 218 and 267–268 (SF). Residue histidine 218 participates in Fe cation binding. Histidine 275 serves as a coordination point for Fe cation. Residues 277-291 (FLAAWPVIGIWFTAL) form a helical membrane-spanning segment. Positions 335, 336, 345, and 347 each coordinate [CaMn4O5] cluster.

This sequence belongs to the reaction center PufL/M/PsbA/D family. In terms of assembly, PSII is composed of 1 copy each of membrane proteins PsbA, PsbB, PsbC, PsbD, PsbE, PsbF, PsbH, PsbI, PsbJ, PsbK, PsbL, PsbM, PsbT, PsbX, PsbY, PsbZ, Psb30/Ycf12, at least 3 peripheral proteins of the oxygen-evolving complex and a large number of cofactors. It forms dimeric complexes. The D1/D2 heterodimer binds P680, chlorophylls that are the primary electron donor of PSII, and subsequent electron acceptors. It shares a non-heme iron and each subunit binds pheophytin, quinone, additional chlorophylls, carotenoids and lipids. D1 provides most of the ligands for the Mn4-Ca-O5 cluster of the oxygen-evolving complex (OEC). There is also a Cl(-1) ion associated with D1 and D2, which is required for oxygen evolution. The PSII complex binds additional chlorophylls, carotenoids and specific lipids. serves as cofactor. In terms of processing, tyr-164 forms a radical intermediate that is referred to as redox-active TyrZ, YZ or Y-Z.

It localises to the plastid. It is found in the chloroplast thylakoid membrane. It catalyses the reaction 2 a plastoquinone + 4 hnu + 2 H2O = 2 a plastoquinol + O2. In terms of biological role, photosystem II (PSII) is a light-driven water:plastoquinone oxidoreductase that uses light energy to abstract electrons from H(2)O, generating O(2) and a proton gradient subsequently used for ATP formation. It consists of a core antenna complex that captures photons, and an electron transfer chain that converts photonic excitation into a charge separation. The D1/D2 (PsbA/PsbD) reaction center heterodimer binds P680, the primary electron donor of PSII as well as several subsequent electron acceptors. The polypeptide is Photosystem II protein D1 (Heterocapsa niei (Dinoflagellate)).